The following is a 1235-amino-acid chain: Ubiquitin carboxyl-terminal hydrolase 40 (1235 aa).

One can recognise a USP domain in the interval 41–482 (SGIRNQGGTC…SAYMLFYRKA (442 aa)). Cysteine 50 serves as the catalytic Nucleophile. Catalysis depends on histidine 305, which acts as the Proton acceptor.

Belongs to the peptidase C19 family.

The enzyme catalyses Thiol-dependent hydrolysis of ester, thioester, amide, peptide and isopeptide bonds formed by the C-terminal Gly of ubiquitin (a 76-residue protein attached to proteins as an intracellular targeting signal).. The polypeptide is Ubiquitin carboxyl-terminal hydrolase 40 (Usp40) (Mus musculus (Mouse)).